A 412-amino-acid chain; its full sequence is MSRRKQTNPNKVHWDQVFAGLEEQARQAMMKTDFPGDLGSQRQAIQQLRDQDSSSSDSEGDEEETTQDEVSSHTSEEDGGVVKVEKELENAEQPVGGKKVVEHEVTENLHSDPLLGLCQCPLCQLDCGSREQLIAHVYQHTAAVVSAKSYMCPVCGRALSSPGSLGRHLLIHSEDQRSNCAVCGARFTSHATFNSEKLPEVLNVESLPPAHSEGPSSAEGKDIAFTPPVYPAGILLVCNNCAAYRKLLEAQTPSVRKWALRRQNEPLEVRLQRLERERTAKKSRRDNETPEEREVRRMRDREAKRLQRMQETDEQRARRLQRDREAMRLKRANETPEKRQARLIREREAKRLKRRLEKMDMMLRAQFGQDPSAMAALAAEMNFFQLPVSGVELDSQLLGKMAFEEQNSSSLH.

The tract at residues Arg-26 to Lys-83 is disordered. Positions Ser-58 to Gln-67 are enriched in acidic residues. 2 C2H2-type zinc fingers span residues Gly-116–His-140 and Tyr-150–His-172. Positions Lys-257–Gln-366 form a coiled coil. The segment at Arg-278–Arg-319 is disordered.

The protein belongs to the krueppel C2H2-type zinc-finger protein family.

The protein localises to the nucleus. May be involved in transcriptional regulation. The chain is Zinc finger protein 821 (ZNF821) from Bos taurus (Bovine).